A 398-amino-acid polypeptide reads, in one-letter code: Elongation factor Tu (398 aa).

The tr-type G domain occupies 10-207; that stretch reads KIHLNVGTIG…ILDKNIPVPN (198 aa). The tract at residues 19–26 is G1; the sequence is GHVDHGKT. 19-26 serves as a coordination point for GTP; sequence GHVDHGKT. T26 serves as a coordination point for Mg(2+). The segment at 60 to 64 is G2; it reads GITIS. Positions 81–84 are G3; that stretch reads DCPG. GTP contacts are provided by residues 81 to 85 and 136 to 139; these read DCPGH and NKAD. A G4 region spans residues 136 to 139; sequence NKAD. The G5 stretch occupies residues 174–176; it reads SAL.

Belongs to the TRAFAC class translation factor GTPase superfamily. Classic translation factor GTPase family. EF-Tu/EF-1A subfamily. Monomer.

It localises to the cytoplasm. The enzyme catalyses GTP + H2O = GDP + phosphate + H(+). Its function is as follows. GTP hydrolase that promotes the GTP-dependent binding of aminoacyl-tRNA to the A-site of ribosomes during protein biosynthesis. The chain is Elongation factor Tu from Carsonella ruddii (strain PV).